The sequence spans 501 residues: DELTA-alicitoxin-Pse2a (501 aa).

The first 22 residues, 1–22, serve as a signal peptide directing secretion; it reads MSPYFKLSSALIFLAITMEALC. The propeptide occupies 23–35; sequence SPIENTSTSNKDN. In terms of domain architecture, MACPF spans 23 to 359; the sequence is SPIENTSTSN…GFLHFGCSYL (337 aa). The stretch at 135–159 forms a coiled coil; that stretch reads AAVTNNIASSEEEVQGLSLNLKAYS. In terms of domain architecture, EGF-like spans 388 to 422; that stretch reads VCKVGPEGCQHHEDCHYRAAFWCECGGPYDLARTC. Intrachain disulfides connect cysteine 389/cysteine 402, cysteine 396/cysteine 410, and cysteine 412/cysteine 422.

Its subcellular location is the secreted. The protein localises to the nematocyst. Functionally, causes lethal toxicity to the shrimp Palaemon paucidence, and hemolytic activity toward sheep red blood cells. The protein is DELTA-alicitoxin-Pse2a of Phyllodiscus semoni (Night anemone).